Consider the following 103-residue polypeptide: Small ubiquitin-related modifier 3 (103 aa).

Glycyl lysine isopeptide (Lys-Gly) (interchain with G-Cter in SUMO2) cross-links involve residues lysine 5 and lysine 7. A Glycyl lysine isopeptide (Lys-Gly) (interchain with G-Cter in SUMO); alternate cross-link involves residue lysine 11. Lysine 11 participates in a covalent cross-link: Glycyl lysine isopeptide (Lys-Gly) (interchain with G-Cter in SUMO2); alternate. In terms of domain architecture, Ubiquitin-like spans 15 to 92; the sequence is DHINLKVAGQ…IDVFQQQTGG (78 aa). Residue glycine 92 forms a Glycyl lysine isopeptide (Gly-Lys) (interchain with K-? in acceptor proteins) linkage. Positions 93-103 are excised as a propeptide; the sequence is VPESSLAGHSF.

The protein belongs to the ubiquitin family. SUMO subfamily. As to quaternary structure, covalently attached to a number of proteins. Interacts with BMAL1. Interacts with USP25 (via ts SIM domain); the interaction sumoylates USP25 and inhibits its ubiquitin hydrolyzing activity. Interacts with SAE2 and UBE2I. Polymeric chains can be formed through Lys-11 cross-linking. In terms of processing, cleavage of precursor form by SENP1, SENP2 or SENP5 is necessary for function. In terms of tissue distribution, expressed predominantly in liver.

The protein resides in the cytoplasm. The protein localises to the nucleus. Its subcellular location is the PML body. Ubiquitin-like protein which can be covalently attached to target lysines either as a monomer or as a lysine-linked polymer. Does not seem to be involved in protein degradation and may function as an antagonist of ubiquitin in the degradation process. Plays a role in a number of cellular processes such as nuclear transport, DNA replication and repair, mitosis and signal transduction. Covalent attachment to its substrates requires prior activation by the E1 complex SAE1-SAE2 and linkage to the E2 enzyme UBE2I, and can be promoted by an E3 ligase such as PIAS1-4, RANBP2 or CBX4. Plays a role in the regulation of sumoylation status of SETX. The chain is Small ubiquitin-related modifier 3 from Homo sapiens (Human).